A 292-amino-acid polypeptide reads, in one-letter code: 4-hydroxy-tetrahydrodipicolinate synthase (292 aa).

A pyruvate-binding site is contributed by Thr45. Tyr133 functions as the Proton donor/acceptor in the catalytic mechanism. Catalysis depends on Lys161, which acts as the Schiff-base intermediate with substrate. Ile203 is a pyruvate binding site.

Belongs to the DapA family. As to quaternary structure, homodimer.

The protein localises to the cytoplasm. The enzyme catalyses L-aspartate 4-semialdehyde + pyruvate = (2S,4S)-4-hydroxy-2,3,4,5-tetrahydrodipicolinate + H2O + H(+). The protein operates within amino-acid biosynthesis; L-lysine biosynthesis via DAP pathway; (S)-tetrahydrodipicolinate from L-aspartate: step 3/4. In terms of biological role, catalyzes the condensation of (S)-aspartate-beta-semialdehyde [(S)-ASA] and pyruvate to 4-hydroxy-tetrahydrodipicolinate (HTPA). The protein is 4-hydroxy-tetrahydrodipicolinate synthase of Pseudomonas syringae pv. syringae (strain B728a).